Consider the following 111-residue polypeptide: Magnetosome protein MamF (111 aa).

Residues 1 to 17 (MAETILIETKTAGGNCR) lie on the Cytoplasmic side of the membrane. A helical transmembrane segment spans residues 18-38 (SYLMAGASYLGILCFVPLLMS). Residues 39-50 (RDDEYVYFHAKQ) lie on the Lumenal side of the membrane. A helical membrane pass occupies residues 51-71 (GLVLWMWSILAMFALHLPGIG). A topological domain (cytoplasmic) is located at residue Lys-72. Residues 73–93 (WLFGFSSMGVLMLSVVGLVSV) form a helical membrane-spanning segment. The Lumenal segment spans residues 94–111 (ALRRTWRLPLISHVVALI).

This sequence belongs to the magnetosome MamF/MmsF protein family. In terms of assembly, may form homooligomers. In terms of processing, subject to cleavage or degradation; identified by N-terminal sequencing of proteins that are about 103, 92 and 15 kDa in size.

The protein resides in the magnetosome membrane. In terms of biological role, plays a role in regulating magnetite crystal size; partially redundant function with MmsF. This chain is Magnetosome protein MamF, found in Magnetospirillum gryphiswaldense (strain DSM 6361 / JCM 21280 / NBRC 15271 / MSR-1).